The primary structure comprises 424 residues: Histidine--tRNA ligase (424 aa).

It belongs to the class-II aminoacyl-tRNA synthetase family. Homodimer.

It localises to the cytoplasm. The catalysed reaction is tRNA(His) + L-histidine + ATP = L-histidyl-tRNA(His) + AMP + diphosphate + H(+). The chain is Histidine--tRNA ligase from Shigella sonnei (strain Ss046).